The primary structure comprises 134 residues: ATP synthase epsilon chain (134 aa).

This sequence belongs to the ATPase epsilon chain family. F-type ATPases have 2 components, CF(1) - the catalytic core - and CF(0) - the membrane proton channel. CF(1) has five subunits: alpha(3), beta(3), gamma(1), delta(1), epsilon(1). CF(0) has three main subunits: a, b and c.

It localises to the cell membrane. Functionally, produces ATP from ADP in the presence of a proton gradient across the membrane. The sequence is that of ATP synthase epsilon chain from Listeria monocytogenes serotype 4a (strain HCC23).